A 62-amino-acid chain; its full sequence is [Ser6, Val10, Asp11]-phyllokinin (62 aa).

An N-terminal signal peptide occupies residues 1-22; sequence MSFLKKSLLLVLFLGLVSFSIC. Positions 23-51 are excised as a propeptide; sequence EEEKRETEEEENEDDMDEESEEKKRESPD. The tract at residues 24 to 62 is disordered; that stretch reads EEKRETEEEENEDDMDEESEEKKRESPDRPPGFSPFRVD. A compositionally biased stretch (acidic residues) spans 30–42; the sequence is EEEENEDDMDEES.

It belongs to the frog skin active peptide (FSAP) family. Bradykinin-related peptide subfamily. As to expression, expressed by the skin glands.

It localises to the secreted. Functionally, induces relaxation of rat smooth muscle from tail artery and contraction of that from ileum, urinary bladder and uterus. Binds to both bradykinin receptor B1 (BDKRB1) and B2 (BDKRB2). In Agalychnis spurrelli (Gliding leaf frog), this protein is [Ser6, Val10, Asp11]-phyllokinin.